We begin with the raw amino-acid sequence, 93 residues long: Large ribosomal subunit protein uL23cz/uL23cy (93 aa).

Belongs to the universal ribosomal protein uL23 family. As to quaternary structure, part of the 50S ribosomal subunit.

It is found in the plastid. The protein localises to the chloroplast. In terms of biological role, binds to 23S rRNA. In Citrus sinensis (Sweet orange), this protein is Large ribosomal subunit protein uL23cz/uL23cy (rpl23-A).